Consider the following 376-residue polypeptide: MLDLIQTRRDLHQIPEIGLEEFKTQAYLLDVIEKLTTGKDFVQIRTWRTGILVYLQGSQPERTIGWRTDIDGLPIVEQTGLPFASQHQGRMHACGHDFHMTIALGCLERALEEQPKNNLLFLFQPAEENEAGGMLMYEDDAFGDWLPDQFYGLHVRPDLKVGQIATNTHTLFAGTCEVKIRFKGKGGHAAFPHEANDALVAASYFVTQVQSVVSRNVNPIEGAVVTFGVFQAGTTNNVITDTAFLHGTIRALTQDMSLLVQKRVKTVAEGVAAAFDMEVEVELKQGGYLPVENNPALARELMDFFDEKDGIELIDIEPAMTGEDFGYLLSKVDGVMFWLGIDSPYALHHPQMSPKEEVLAIGVAAVSSFLKKKAAE.

Asp-69 is an active-site residue. Catalysis depends on Glu-128, which acts as the Proton acceptor.

It belongs to the peptidase M20A family. N-acetyldiaminopimelate deacetylase subfamily.

The catalysed reaction is N-acetyl-(2S,6S)-2,6-diaminopimelate + H2O = (2S,6S)-2,6-diaminopimelate + acetate. The protein operates within amino-acid biosynthesis; L-lysine biosynthesis via DAP pathway; LL-2,6-diaminopimelate from (S)-tetrahydrodipicolinate (acetylase route): step 3/3. Its function is as follows. Catalyzes the conversion of N-acetyl-diaminopimelate to diaminopimelate and acetate. This Streptococcus pneumoniae (strain JJA) protein is N-acetyldiaminopimelate deacetylase.